The chain runs to 190 residues: Adenylate kinase (190 aa).

ATP is bound at residue 11–16 (GAGKGT). The segment at 31-60 (STGDIFRFNIKNETELGKLAKTFMDKGDLV) is NMP. Residues T32, R37, 58-60 (DLV), 86-89 (GFPR), and Q93 contribute to the AMP site. The tract at residues 127-137 (ERGKTSGRVDD) is LID. R128 is an ATP binding site. The AMP site is built by R134 and R146. ATP is bound at residue G174.

The protein belongs to the adenylate kinase family. Monomer.

The protein localises to the cytoplasm. The catalysed reaction is AMP + ATP = 2 ADP. Its pathway is purine metabolism; AMP biosynthesis via salvage pathway; AMP from ADP: step 1/1. In terms of biological role, catalyzes the reversible transfer of the terminal phosphate group between ATP and AMP. Plays an important role in cellular energy homeostasis and in adenine nucleotide metabolism. This chain is Adenylate kinase, found in Flavobacterium psychrophilum (strain ATCC 49511 / DSM 21280 / CIP 103535 / JIP02/86).